The primary structure comprises 242 residues: UPF0246 protein SP70585_1589 (242 aa).

This sequence belongs to the UPF0246 family.

This chain is UPF0246 protein SP70585_1589, found in Streptococcus pneumoniae (strain 70585).